Here is a 588-residue protein sequence, read N- to C-terminus: MEVAAAVGVIASVPILYKAIRPRIKTSVECWFCRKSTKVEYQQRNSFTCPSCEQYNGFTEDGDYNRRIPGQAWTTPKRYCEPGKMQSEKPSTFLDRFGGVNMSPKASNGLCSECNLGQEIIMNKVAEFEPIDEDRWNEELEDYRYKLERMYQLCPRCTIQVHGKLEEDKKKYSYLLKVKYKLKHAIGSTLREVMNNQKRSRRFFFAGGSTCEALHFGCLISSIILFLANIDFLQQDAGASLINLPKALQDILPEVYKYSFVINFLIFTTHLIAAFNNKCRVTLPDLLLPILLILAMLTVLTSSDNLSQDVALVRGACASFSTILSMAVTLLPRKKLHKKRPNKIVSSAFSVASTPISQCSSQNSRNASLLDHDHTILRRSPHTPSASPPAMNSSPPLLREITNGPVWSAMRSRENKENMQSYQTKPNNHVESMDWDDSESMAAQSVAQSTRSSHFKPGLLSRNINERMTAQQLTPSVANLNLDTRSVDSPSIFSRQHRQMAQQQNHTPTRSLFGPPRSMVASQYDRSHYMAPEAHTRPGSVFTSVSQQDGHSTVSGAWQCRVIGILFALVFIVLIMQIGLFYVLFTRN.

Over Met-1–Glu-212 the chain is Nuclear. The helical transmembrane segment at Ala-213–Leu-233 threads the bilayer. Residues Gln-234–Glu-254 lie on the Perinuclear space side of the membrane. The helical transmembrane segment at Val-255–Phe-275 threads the bilayer. Over Asn-276–Arg-280 the chain is Nuclear. Residues Val-281 to Thr-301 traverse the membrane as a helical segment. Topologically, residues Ser-302 to Asp-309 are perinuclear space. A helical membrane pass occupies residues Val-310–Leu-330. The Nuclear segment spans residues Leu-331 to Gly-564. The tract at residues Arg-378–Pro-457 is disordered. Residues Pro-384–Pro-396 are compositionally biased toward low complexity. Composition is skewed to polar residues over residues Asn-418 to Val-430 and Met-441 to Ser-452. Residues Ile-565–Phe-585 traverse the membrane as a helical segment. Residues Thr-586–Asn-588 lie on the Perinuclear space side of the membrane.

This sequence belongs to the TMEM201 family.

The protein resides in the nucleus inner membrane. Plays a role in nuclear migration in hypodermal cells. In Caenorhabditis elegans, this protein is Transmembrane protein 201 homolog.